Reading from the N-terminus, the 72-residue chain is Probable protein transport protein Sec61 subunit gamma (72 aa).

Residues 1-40 (MSQKLQKPSFLSEYLRSIRLFSKKCVRPSGKELSMSIKRH) lie on the Cytoplasmic side of the membrane. Residues 41–61 (AIGIGFLGILGYAIKLIHIPI) traverse the membrane as a helical segment. At 62–72 (NNIIVSSPGKE) the chain is on the extracellular side.

The protein belongs to the SecE/SEC61-gamma family. In terms of assembly, heterotrimeric complex composed of SEC61-alpha, SEC61-beta and SEC61-gamma.

It is found in the endoplasmic reticulum membrane. In terms of biological role, necessary for protein translocation in the endoplasmic reticulum. This is Probable protein transport protein Sec61 subunit gamma from Encephalitozoon cuniculi (strain GB-M1) (Microsporidian parasite).